Here is a 132-residue protein sequence, read N- to C-terminus: ATP synthase epsilon chain (132 aa).

Belongs to the ATPase epsilon chain family. As to quaternary structure, F-type ATPases have 2 components, CF(1) - the catalytic core - and CF(0) - the membrane proton channel. CF(1) has five subunits: alpha(3), beta(3), gamma(1), delta(1), epsilon(1). CF(0) has three main subunits: a, b and c.

It is found in the cell inner membrane. Its function is as follows. Produces ATP from ADP in the presence of a proton gradient across the membrane. This chain is ATP synthase epsilon chain, found in Anaeromyxobacter dehalogenans (strain 2CP-C).